Reading from the N-terminus, the 427-residue chain is Tuberculostearic acid methyltransferase UfaA1 (427 aa).

The protein belongs to the CFA/CMAS family.

Its pathway is lipid metabolism; fatty acid biosynthesis. Its activity is regulated as follows. Inhibited by S-adenosyl-L-homocysteine. Its function is as follows. Involved in the biosynthesis of the tuberculostearic acid (10-methylstearic-acid or TSA), a constituent lipid of the mycobacterial cell wall. Catalyzes the transfer of the methyl group from S-adenosyl-L-methionine (SAM) to the double bond of oleic acid in phosphatidylethanolamine or phosphatidylcholine to produce TSA. This chain is Tuberculostearic acid methyltransferase UfaA1, found in Mycobacterium tuberculosis (strain ATCC 25618 / H37Rv).